The sequence spans 259 residues: MLFNIANSVGKRTVKFAQSVGSFSLFSFAAVSSIIRPPLYLSLIIRQLLFIGFHSLPVVAMTTFFSGAVLALQSYIGFSRFSAESSIATVVVLSLTRELGPVLAGLMVAGRVGASIAAEIATMRVTEQIDALYTLSTDPIKYLVFPRVITAIITMPCLVLIGDIIGVMGGYLVGVYKLDFNSAAYLTSTFQYLEPIDVISGLVKAGVFGFIISIISCYSGYYSGKGAKGVGRATTSAVVNSSILILISNYLITELFFKV.

Helical transmembrane passes span 13-35 (TVKF…SSII), 49-69 (LFIG…SGAV), 148-168 (VITA…IGVM), 195-215 (PIDV…ISII), and 237-257 (AVVN…ELFF).

This sequence belongs to the MlaE permease family.

It localises to the cell inner membrane. In terms of biological role, could be part of an ABC transporter complex. The sequence is that of Probable ABC transporter permease protein RC0129 from Rickettsia conorii (strain ATCC VR-613 / Malish 7).